Reading from the N-terminus, the 476-residue chain is Eukaryotic translation initiation factor 3 subunit L (476 aa).

The PCI domain occupies 257–452 (DAIRMFSHIL…DLDYALENDL (196 aa)).

Belongs to the eIF-3 subunit L family. As to quaternary structure, component of the eukaryotic translation initiation factor 3 (eIF-3) complex.

Its subcellular location is the cytoplasm. Its function is as follows. Component of the eukaryotic translation initiation factor 3 (eIF-3) complex, which is involved in protein synthesis of a specialized repertoire of mRNAs and, together with other initiation factors, stimulates binding of mRNA and methionyl-tRNAi to the 40S ribosome. The eIF-3 complex specifically targets and initiates translation of a subset of mRNAs involved in cell proliferation. The protein is Eukaryotic translation initiation factor 3 subunit L of Aspergillus niger (strain ATCC MYA-4892 / CBS 513.88 / FGSC A1513).